The sequence spans 315 residues: Cytochrome bo(3) ubiquinol oxidase subunit 2 (315 aa).

Residues methionine 1–glycine 24 form the signal peptide. Cysteine 25 carries the N-palmitoyl cysteine lipid modification. Cysteine 25 is lipidated: S-diacylglycerol cysteine. The Periplasmic segment spans residues cysteine 25–leucine 50. The helical transmembrane segment at methionine 51–lysine 68 threads the bilayer. The Cytoplasmic segment spans residues tyrosine 69 to valine 92. Residues tryptophan 93–threonine 111 traverse the membrane as a helical segment. At histidine 112–histidine 315 the chain is on the periplasmic side. The segment at methionine 288–histidine 315 is disordered. Residues glutamate 294 to histidine 315 are compositionally biased toward basic and acidic residues.

The protein belongs to the cytochrome c oxidase subunit 2 family. Heterooctamer of two A chains, two B chains, two C chains and two D chains.

Its subcellular location is the cell inner membrane. Cytochrome bo(3) ubiquinol terminal oxidase is the component of the aerobic respiratory chain of E.coli that predominates when cells are grown at high aeration. Has proton pump activity across the membrane in addition to electron transfer, pumping 2 protons/electron. In Escherichia coli O6:H1 (strain CFT073 / ATCC 700928 / UPEC), this protein is Cytochrome bo(3) ubiquinol oxidase subunit 2 (cyoA).